The following is a 603-amino-acid chain: Glutathione-regulated potassium-efflux system protein KefB (603 aa).

Transmembrane regions (helical) follow at residues 5–25 (ALLT…PIAA), 29–49 (IGAV…GLGF), 53–73 (VEAI…IIGL), 87–107 (IFGV…GALY), 115–135 (SALI…LQLM), 152–172 (VLLF…ILAG), 180–202 (WERI…YLVR), 207–227 (FIAA…LVLG), 230–250 (LFME…GILL), 268–288 (GLLL…GILY), 291–311 (IVKI…VLYF), 326–346 (FAGV…AAAS), and 356–376 (PLLL…MQVI). One can recognise an RCK N-terminal domain in the interval 400–521 (EPQVIVVGFG…VRHFSRETFS (122 aa)).

This sequence belongs to the monovalent cation:proton antiporter 2 (CPA2) transporter (TC 2.A.37) family. KefB subfamily. Interacts with the regulatory subunit KefG.

The protein resides in the cell inner membrane. Its function is as follows. Pore-forming subunit of a potassium efflux system that confers protection against electrophiles. Catalyzes K(+)/H(+) antiport. The protein is Glutathione-regulated potassium-efflux system protein KefB of Pectobacterium atrosepticum (strain SCRI 1043 / ATCC BAA-672) (Erwinia carotovora subsp. atroseptica).